The following is a 348-amino-acid chain: S-adenosylmethionine-dependent nucleotide dehydratase RSAD2 (348 aa).

A Radical SAM core domain is found at serine 56–leucine 276. Residues cysteine 70, cysteine 74, and cysteine 77 each contribute to the [4Fe-4S] cluster site.

It belongs to the radical SAM superfamily. RSAD2 family. The cofactor is [4Fe-4S] cluster. Expressed at low levels in spleen and head kidney.

The protein resides in the endoplasmic reticulum membrane. In terms of biological role, interferon-inducible iron-sulfur (4FE-4S) cluster-binding antiviral protein which plays a major role in the cell antiviral state induced by type I and type II interferon. This chain is S-adenosylmethionine-dependent nucleotide dehydratase RSAD2, found in Oncorhynchus mykiss (Rainbow trout).